Reading from the N-terminus, the 521-residue chain is MIKQALISVSDKTGIVDFAKSLSDLGVKLLSTGGTAKLLADAGLPVTEVADYTGFPEMLDGRVKTLHPKVHGGILARRDLPEHMQALEQHDIPTIDLLVVNLYPFVATIAKDDCTLADAIENIDIGGPTMLRSAAKNHRDVTVVVDPADYAVVLDEMKANGNAIGYATNFRLATKVFAHTAQYDGAITNYLTSLTDELQHASRSAYPATLNMAFDKVQDLRYGENPHQSAAFYRDLAAPAGALANYRQLQGKELSYNNIADSDAAWECVKTFDAPACVIIKHANPCGVAVGNDSADAYAKAFQTDPTSAFGGIIAFNREVDEAAAQAVAKQFVEVLIAPSFSDAAKQVFAAKQNVRLLEIALGDGHNAFDLKRVGGGLLVQSLDSKNVQPSELRVVTKRQPSAKEMDDLLFAWRVAKYVKSNAIVFCGNGMTLGVGAGQMSRVDSARIASIKAQNAGLTLAGSAVASDAFFPFRDGLDVVVAAGATCVIQPGGSMRDDEVIAAADEHGIAMILTGVRHFRH.

The MGS-like domain maps to 1–145 (MIKQALISVS…KNHRDVTVVV (145 aa)).

It belongs to the PurH family.

The catalysed reaction is (6R)-10-formyltetrahydrofolate + 5-amino-1-(5-phospho-beta-D-ribosyl)imidazole-4-carboxamide = 5-formamido-1-(5-phospho-D-ribosyl)imidazole-4-carboxamide + (6S)-5,6,7,8-tetrahydrofolate. It carries out the reaction IMP + H2O = 5-formamido-1-(5-phospho-D-ribosyl)imidazole-4-carboxamide. Its pathway is purine metabolism; IMP biosynthesis via de novo pathway; 5-formamido-1-(5-phospho-D-ribosyl)imidazole-4-carboxamide from 5-amino-1-(5-phospho-D-ribosyl)imidazole-4-carboxamide (10-formyl THF route): step 1/1. The protein operates within purine metabolism; IMP biosynthesis via de novo pathway; IMP from 5-formamido-1-(5-phospho-D-ribosyl)imidazole-4-carboxamide: step 1/1. This is Bifunctional purine biosynthesis protein PurH from Burkholderia ambifaria (strain MC40-6).